Reading from the N-terminus, the 351-residue chain is dTDP-glucose 4,6-dehydratase (351 aa).

Residues 12 to 13 (FI), 32 to 35 (DALT), 58 to 59 (DI), 80 to 84 (FAAES), and Thr99 contribute to the NAD(+) site. Residue Ser84 participates in substrate binding. Thr133 is a substrate binding site. Asp134 acts as the Proton donor in catalysis. Residues Glu135 and Tyr158 each act as proton acceptor in the active site. Residue 158-162 (YSASK) participates in NAD(+) binding. A substrate-binding site is contributed by Asn187. Asn188 serves as a coordination point for NAD(+). Substrate is bound by residues 197-198 (KL), 213-215 (PVY), Arg222, Asn257, and 289-293 (DRPGH).

The protein belongs to the NAD(P)-dependent epimerase/dehydratase family. dTDP-glucose dehydratase subfamily. Homodimer. NAD(+) is required as a cofactor.

The catalysed reaction is dTDP-alpha-D-glucose = dTDP-4-dehydro-6-deoxy-alpha-D-glucose + H2O. It participates in carbohydrate biosynthesis; dTDP-L-rhamnose biosynthesis. It functions in the pathway bacterial outer membrane biogenesis; LPS O-antigen biosynthesis. Functionally, catalyzes the dehydration of dTDP-D-glucose to form dTDP-6-deoxy-D-xylo-4-hexulose via a three-step process involving oxidation, dehydration and reduction. The polypeptide is dTDP-glucose 4,6-dehydratase (rfbB) (Xanthomonas campestris pv. campestris (strain ATCC 33913 / DSM 3586 / NCPPB 528 / LMG 568 / P 25)).